Consider the following 80-residue polypeptide: Cell division protein ZapB (80 aa).

A coiled-coil region spans residues 3–80 (FEVLEKLEAK…SLLGKMEDVE (78 aa)).

It belongs to the ZapB family. In terms of assembly, homodimer. The ends of the coiled-coil dimer bind to each other, forming polymers. Interacts with FtsZ.

The protein localises to the cytoplasm. Its function is as follows. Non-essential, abundant cell division factor that is required for proper Z-ring formation. It is recruited early to the divisome by direct interaction with FtsZ, stimulating Z-ring assembly and thereby promoting cell division earlier in the cell cycle. Its recruitment to the Z-ring requires functional FtsA or ZipA. This chain is Cell division protein ZapB, found in Vibrio cholerae serotype O1 (strain ATCC 39541 / Classical Ogawa 395 / O395).